Here is a 206-residue protein sequence, read N- to C-terminus: LexA repressor (206 aa).

Positions 28–48 (VREIGEAVGLASSSTVHGHLA) form a DNA-binding region, H-T-H motif. Active-site for autocatalytic cleavage activity residues include S128 and K166.

It belongs to the peptidase S24 family. In terms of assembly, homodimer.

The catalysed reaction is Hydrolysis of Ala-|-Gly bond in repressor LexA.. Its function is as follows. Represses a number of genes involved in the response to DNA damage (SOS response), including recA and lexA. In the presence of single-stranded DNA, RecA interacts with LexA causing an autocatalytic cleavage which disrupts the DNA-binding part of LexA, leading to derepression of the SOS regulon and eventually DNA repair. The protein is LexA repressor of Bacillus pumilus (strain SAFR-032).